Reading from the N-terminus, the 149-residue chain is Cyanate hydratase (149 aa).

Catalysis depends on residues Arg-90, Glu-93, and Ser-116.

This sequence belongs to the cyanase family.

The enzyme catalyses cyanate + hydrogencarbonate + 3 H(+) = NH4(+) + 2 CO2. Its function is as follows. Catalyzes the reaction of cyanate with bicarbonate to produce ammonia and carbon dioxide. This chain is Cyanate hydratase, found in Synechocystis sp. (strain ATCC 27184 / PCC 6803 / Kazusa).